A 304-amino-acid chain; its full sequence is Quinolinate synthase (304 aa).

Residues His-24 and Ser-41 each coordinate iminosuccinate. [4Fe-4S] cluster is bound at residue Cys-86. Residues 112-114 (YVN) and Ser-129 contribute to the iminosuccinate site. Cys-171 provides a ligand contact to [4Fe-4S] cluster. Iminosuccinate is bound by residues 197-199 (HPE) and Thr-214. Cys-259 contacts [4Fe-4S] cluster.

Belongs to the quinolinate synthase family. Type 2 subfamily. It depends on [4Fe-4S] cluster as a cofactor.

Its subcellular location is the cytoplasm. It carries out the reaction iminosuccinate + dihydroxyacetone phosphate = quinolinate + phosphate + 2 H2O + H(+). The protein operates within cofactor biosynthesis; NAD(+) biosynthesis; quinolinate from iminoaspartate: step 1/1. Functionally, catalyzes the condensation of iminoaspartate with dihydroxyacetone phosphate to form quinolinate. The sequence is that of Quinolinate synthase from Geobacter metallireducens (strain ATCC 53774 / DSM 7210 / GS-15).